A 286-amino-acid polypeptide reads, in one-letter code: MRQITDISQLKEAIKQYHSEGKSIGFVPTMGFLHEGHLTLADKARQENDAVIMSIFVNPAQFGPNEDFEAYPRDIERDAALAENAGVDILFTPDAHDMYPGEKNVTIHVERRTDVLCGRSREGHFDGVAIVLTKLFNLVKPTRAYFGLKDAQQVAVVDGLISDFFMDIELVPVDTVREEDGLAKSSRNVYLTAEERKEAPKLYRALQTSAELVQAGERDPEAVIKAAKDIIETTSGTIDYVELYSYPELEPVNEIAGKMILAVAVAFSKARLIDNIIIDIREMERI.

Residue 30 to 37 (MGFLHEGH) coordinates ATP. Histidine 37 serves as the catalytic Proton donor. Glutamine 61 is a (R)-pantoate binding site. Residue glutamine 61 coordinates beta-alanine. 147-150 (GLKD) contacts ATP. Glutamine 153 is a (R)-pantoate binding site. ATP-binding positions include valine 176 and 184–187 (KSSR).

It belongs to the pantothenate synthetase family. In terms of assembly, homodimer.

The protein localises to the cytoplasm. It carries out the reaction (R)-pantoate + beta-alanine + ATP = (R)-pantothenate + AMP + diphosphate + H(+). The protein operates within cofactor biosynthesis; (R)-pantothenate biosynthesis; (R)-pantothenate from (R)-pantoate and beta-alanine: step 1/1. Its function is as follows. Catalyzes the condensation of pantoate with beta-alanine in an ATP-dependent reaction via a pantoyl-adenylate intermediate. This chain is Pantothenate synthetase, found in Bacillus subtilis (strain 168).